We begin with the raw amino-acid sequence, 256 residues long: tRNA (guanine-N(1)-)-methyltransferase (256 aa).

S-adenosyl-L-methionine contacts are provided by residues G117 and 137 to 142; that span reads LGDFVL.

The protein belongs to the RNA methyltransferase TrmD family. Homodimer.

Its subcellular location is the cytoplasm. It carries out the reaction guanosine(37) in tRNA + S-adenosyl-L-methionine = N(1)-methylguanosine(37) in tRNA + S-adenosyl-L-homocysteine + H(+). In terms of biological role, specifically methylates guanosine-37 in various tRNAs. The polypeptide is tRNA (guanine-N(1)-)-methyltransferase (Methylibium petroleiphilum (strain ATCC BAA-1232 / LMG 22953 / PM1)).